Reading from the N-terminus, the 106-residue chain is PAT complex subunit Asterix (106 aa).

The interval 1–29 is disordered; sequence MSTNNMSDPRRPNKVLRYKPPPSECNPAL. S2 is subject to N-acetylserine. Over 2-32 the chain is Cytoplasmic; it reads STNNMSDPRRPNKVLRYKPPPSECNPALDDP. The chain crosses the membrane as a helical span at residues 33–51; it reads TPDYMNLLGMIFSMCGLML. A topological domain (lumenal) is located at residue K52. The chain crosses the membrane as a helical span at residues 53–70; sequence LKWCAWVAVYCSFISFAN. The Cytoplasmic portion of the chain corresponds to 71–74; sequence SRSS. The chain crosses the membrane as a helical span at residues 75–95; sequence EDTKQMMSSFMLSISAVVMSY. The Lumenal portion of the chain corresponds to 96-106; the sequence is LQNPQPMTPPW.

It belongs to the Asterix family. Component of the PAT complex, composed of WDR83OS/Asterix and CCDC47. The PAT complex is part of the multi-pass translocon (MPT) complex, composed of three subcomplexes, the GEL complex (composed of RAB5IF/OPTI and TMCO1), the BOS complex (composed of NCLN/Nicalin, NOMO1 and TMEM147) and the PAT complex (composed of WDR83OS/Asterix and CCDC47). The MPT complex associates with the SEC61 complex.

Its subcellular location is the endoplasmic reticulum membrane. Its function is as follows. Component of the multi-pass translocon (MPT) complex that mediates insertion of multi-pass membrane proteins into the lipid bilayer of membranes. The MPT complex takes over after the SEC61 complex: following membrane insertion of the first few transmembrane segments of proteins by the SEC61 complex, the MPT complex occludes the lateral gate of the SEC61 complex to promote insertion of subsequent transmembrane regions. Within the MPT complex, the PAT subcomplex sequesters any highly polar regions in the transmembrane domains away from the non-polar membrane environment until they can be buried in the interior of the fully assembled protein. Within the PAT subcomplex, WDR83OS/Asterix binds to and redirects the substrate to a location behind the SEC61 complex. The sequence is that of PAT complex subunit Asterix (WDR83OS) from Canis lupus familiaris (Dog).